Consider the following 681-residue polypeptide: Pumilio domain-containing protein C6G9.14 (681 aa).

Disordered stretches follow at residues 180–210 (RPGL…PGLI) and 273–322 (ASTA…NVPS). Low complexity-rich tracts occupy residues 187–210 (TPGP…PGLI) and 273–286 (ASTA…SSGS). The 341-residue stretch at 319–659 (NVPSLISDDP…RILSKLERRH (341 aa)) folds into the PUM-HD domain. Pumilio repeat units lie at residues 342–378 (SLQN…AVFA), 379–414 (ETHP…TFIQ), 415–451 (IIAP…CIVN), 452–487 (ALRP…FIFD), 488–523 (AICE…QLVE), 524–559 (HIVP…AIIS), 560–595 (YFLY…KLIS), and 596–633 (ELMD…ELVE). The segment covering 656–666 (ERRHPSSKEKP) has biased composition (basic and acidic residues). A disordered region spans residues 656–681 (ERRHPSSKEKPIVYSNSERVNTSSSA). A compositionally biased stretch (polar residues) spans 669–681 (YSNSERVNTSSSA).

In Schizosaccharomyces pombe (strain 972 / ATCC 24843) (Fission yeast), this protein is Pumilio domain-containing protein C6G9.14.